The sequence spans 916 residues: Probable serine/threonine-protein kinase DDB_G0267514 (916 aa).

3 disordered regions span residues 283 to 311 (SGGGNSGSGGGNSGSGGSSGNGTSGSGGS), 461 to 518 (NNNQ…SPLD), and 550 to 646 (FNNQ…EPPS). 2 stretches are compositionally biased toward low complexity: residues 461-493 (NNNQNNQNNNQQQQQYQQQQHHQQQQQQYQQQP) and 550-622 (FNNQ…LINN). Polar residues predominate over residues 623-646 (HSPNQYNNQGNILKNSGSVVEPPS). A Protein kinase domain is found at 662 to 916 (LKISSKLGEG…EILNLLNEIP (255 aa)). ATP-binding positions include 668–676 (LGEGTFGVV) and K689. The Proton acceptor role is filled by D784.

It belongs to the protein kinase superfamily. TKL Ser/Thr protein kinase family.

The catalysed reaction is L-seryl-[protein] + ATP = O-phospho-L-seryl-[protein] + ADP + H(+). It catalyses the reaction L-threonyl-[protein] + ATP = O-phospho-L-threonyl-[protein] + ADP + H(+). The sequence is that of Probable serine/threonine-protein kinase DDB_G0267514 from Dictyostelium discoideum (Social amoeba).